The primary structure comprises 348 residues: MAEKVLVTGGAGYIGSHTVLELLEAGYLPVVIDNFHNAFRGGGSLPESLRRVQELTGRSVEFEEMDILDQGALQRLFKKHSFMAVIHFAGLKAVGESVQKPLDYYRVNLTGTIQLLEIMKAHGVKNLVFSSSATVYGNPQYLPLDEAHPTGGCTNPYGKSKFFIEEMIRDLCQADKTWNAVLLRYFNPTGAHASGCIGEDPQGIPNNLMPYVSQVAIGRREALNVFGNDYDTEDGTGVRDYIHVVDLAKGHIAALRKLKEQCGCRIYNLGTGTGYSVLQMVQAMEKASGKKIPYKVVARREGDVAACYANPSLAHEELGWTAALGLDRMCEDLWRWQKQNPSGFGTQA.

Residues 12 to 14, 33 to 37, 66 to 67, Phe88, and Lys92 each bind NAD(+); these read GYI, DNFHN, and DI. Residue 132 to 134 participates in substrate binding; the sequence is SAT. Tyr157 (proton acceptor) is an active-site residue. The NAD(+) site is built by Lys161 and Tyr185. Residues 185–187, 206–208, 224–226, Arg239, and 300–303 contribute to the substrate site; these read YFN, NNL, NVF, and REGD.

It belongs to the NAD(P)-dependent epimerase/dehydratase family. In terms of assembly, homodimer. It depends on NAD(+) as a cofactor.

It catalyses the reaction UDP-alpha-D-glucose = UDP-alpha-D-galactose. It carries out the reaction UDP-N-acetyl-alpha-D-glucosamine = UDP-N-acetyl-alpha-D-galactosamine. Its pathway is carbohydrate metabolism; galactose metabolism. Catalyzes two distinct but analogous reactions: the reversible epimerization of UDP-glucose to UDP-galactose and the reversible epimerization of UDP-N-acetylglucosamine to UDP-N-acetylgalactosamine. The reaction with UDP-Gal plays a critical role in the Leloir pathway of galactose catabolism in which galactose is converted to the glycolytic intermediate glucose 6-phosphate. It contributes to the catabolism of dietary galactose and enables the endogenous biosynthesis of both UDP-Gal and UDP-GalNAc when exogenous sources are limited. Both UDP-sugar interconversions are important in the synthesis of glycoproteins and glycolipids. The protein is UDP-glucose 4-epimerase (GALE) of Pongo abelii (Sumatran orangutan).